A 335-amino-acid chain; its full sequence is DNA polymerase beta (335 aa).

A Glycyl lysine isopeptide (Lys-Gly) (interchain with G-Cter in ubiquitin) cross-link involves residue Lys41. Lys60 is a binding site for K(+). Lys60 serves as a coordination point for Na(+). Lys61 is covalently cross-linked (Glycyl lysine isopeptide (Lys-Gly) (interchain with G-Cter in ubiquitin)). Residues Leu62 and Val65 each coordinate K(+). 2 residues coordinate Na(+): Leu62 and Val65. The active-site Nucleophile; Schiff-base intermediate with DNA; for 5'-dRP lyase activity is the Lys72. Residue Lys72 is modified to N6-acetyllysine. A Glycyl lysine isopeptide (Lys-Gly) (interchain with G-Cter in ubiquitin) cross-link involves residue Lys81. The residue at position 83 (Arg83) is an Omega-N-methylarginine; by PRMT6. Positions 101, 103, and 106 each coordinate K(+). Na(+) is bound by residues Thr101, Val103, and Ile106. Arg149 is a dATP binding site. Arg149 contacts dCTP. Arg149 is a binding site for dGTP. A dTTP-binding site is contributed by Arg149. Arg152 is subject to Omega-N-methylarginine; by PRMT6. DATP is bound by residues Ser180, Arg183, Gly189, and Asp190. The dCTP site is built by Ser180, Arg183, Gly189, and Asp190. The dGTP site is built by Ser180, Arg183, Gly189, Asp190, and Asp192. 4 residues coordinate dTTP: Ser180, Arg183, Gly189, and Asp190. Residues 183 to 192 form a DNA-binding region; sequence RGAESSGDMD. Mg(2+) contacts are provided by Asp190, Asp192, and Asp256.

It belongs to the DNA polymerase type-X family. In terms of assembly, monomer. Binds single-stranded DNA (ssDNA). Interacts with APEX1, LIG1, LIG3, FEN1, PCNA and XRCC1. Interacts with HUWE1/ARF-BP1, STUB1/CHIP and USP47. Interacts with FAM168A. It depends on Mg(2+) as a cofactor. Methylation by PRMT6 stimulates the polymerase activity by enhancing DNA binding and processivity. In terms of processing, ubiquitinated at Lys-41, Lys-61 and Lys-81: monoubiquitinated by HUWE1/ARF-BP1. Monoubiquitinated protein is then the target of STUB1/CHIP, which catalyzes polyubiquitination from monoubiquitin, leading to degradation by the proteasome. USP47 mediates the deubiquitination of monoubiquitinated protein, preventing polyubiquitination by STUB1/CHIP and its subsequent degradation.

The protein resides in the nucleus. It localises to the cytoplasm. It carries out the reaction DNA(n) + a 2'-deoxyribonucleoside 5'-triphosphate = DNA(n+1) + diphosphate. The enzyme catalyses a 5'-end 2'-deoxyribose-2'-deoxyribonucleotide-DNA = (2E,4S)-4-hydroxypenten-2-al-5-phosphate + a 5'-end 5'-phospho-2'-deoxyribonucleoside-DNA + H(+). It catalyses the reaction 2'-deoxyribonucleotide-(2'-deoxyribose 5'-phosphate)-2'-deoxyribonucleotide-DNA = a 3'-end 2'-deoxyribonucleotide-(2,3-dehydro-2,3-deoxyribose 5'-phosphate)-DNA + a 5'-end 5'-phospho-2'-deoxyribonucleoside-DNA + H(+). Repair polymerase that plays a key role in base-excision repair. During this process, the damaged base is excised by specific DNA glycosylases, the DNA backbone is nicked at the abasic site by an apurinic/apyrimidic (AP) endonuclease, and POLB removes 5'-deoxyribose-phosphate from the preincised AP site acting as a 5'-deoxyribose-phosphate lyase (5'-dRP lyase); through its DNA polymerase activity, it adds one nucleotide to the 3' end of the arising single-nucleotide gap. Conducts 'gap-filling' DNA synthesis in a stepwise distributive fashion rather than in a processive fashion as for other DNA polymerases. It is also able to cleave sugar-phosphate bonds 3' to an intact AP site, acting as an AP lyase. The protein is DNA polymerase beta (POLB) of Homo sapiens (Human).